The primary structure comprises 190 residues: Probable calcium-binding protein CML27 (190 aa).

EF-hand domains lie at 27–62 (LNALRLRRVFDLFDRNGDGEITLDEMASALDALGLG), 115–150 (DDEGDMKEAFRVFDEDGDGFISAAELQAVLKKLGLP), and 153–188 (RNLATVQEMICNVDRDCDGRVDFGEFKCMMQGITVW). Ca(2+)-binding residues include aspartate 40, asparagine 42, aspartate 44, glutamate 46, glutamate 51, aspartate 128, aspartate 130, aspartate 132, glutamate 139, aspartate 166, aspartate 168, aspartate 170, arginine 172, and glutamate 177.

Its function is as follows. Potential calcium sensor. This chain is Probable calcium-binding protein CML27 (CML27), found in Oryza sativa subsp. japonica (Rice).